We begin with the raw amino-acid sequence, 535 residues long: Probable acyl-activating enzyme 22 (535 aa).

This sequence belongs to the ATP-dependent AMP-binding enzyme family.

In terms of biological role, may act as an acid--thiol ligase that activates carboxylic acids by forming acyl-CoAs. This chain is Probable acyl-activating enzyme 22 (AEE22), found in Arabidopsis thaliana (Mouse-ear cress).